We begin with the raw amino-acid sequence, 2280 residues long: Acetyl-CoA carboxylase (2280 aa).

In terms of domain architecture, Biotin carboxylation spans 68 to 577 (VITSILIANN…TTGWLDRLIA (510 aa)). One can recognise an ATP-grasp domain in the interval 226–418 (ETNIVTVDDD…LPAAQLQVAM (193 aa)). 266–271 (GGGGKG) lines the ATP pocket. Mn(2+) is bound by residues E375, E389, and N391. R393 is an active-site residue. The 75-residue stretch at 704-778 (LEQENDPTQL…DAGDILGILT (75 aa)) folds into the Biotinyl-binding domain. K745 bears the N6-biotinyllysine mark. Phosphoserine occurs at positions 1179 and 1181. The 340-residue stretch at 1524-1863 (PYPTKEWLQP…KRNNPVPISP (340 aa)) folds into the CoA carboxyltransferase N-terminal domain. The carboxyltransferase stretch occupies residues 1524–2181 (PYPTKEWLQP…EHYALQKITQ (658 aa)). CoA-binding residues include R1772, K2074, and R2076. The 315-residue stretch at 1867–2181 (TWDRDVEFYP…EHYALQKITQ (315 aa)) folds into the CoA carboxyltransferase C-terminal domain.

As to quaternary structure, interacts with sad1. Biotin serves as cofactor. The cofactor is Mn(2+).

The protein resides in the cytoplasm. It carries out the reaction hydrogencarbonate + acetyl-CoA + ATP = malonyl-CoA + ADP + phosphate + H(+). The catalysed reaction is N(6)-biotinyl-L-lysyl-[protein] + hydrogencarbonate + ATP = N(6)-carboxybiotinyl-L-lysyl-[protein] + ADP + phosphate + H(+). The protein operates within lipid metabolism; malonyl-CoA biosynthesis; malonyl-CoA from acetyl-CoA: step 1/1. With respect to regulation, by phosphorylation. In terms of biological role, carries out three functions: biotin carboxyl carrier protein, biotin carboxylase and carboxyltransferase. The chain is Acetyl-CoA carboxylase (cut6) from Schizosaccharomyces pombe (strain 972 / ATCC 24843) (Fission yeast).